The following is a 370-amino-acid chain: MYKRKTASIVKRDSSAAGTTSSAMMMKVDSAETSVRSQSYESTPVSMDTSPDPPTPIKSPSNSQSQSQPGQQRSVGSLVLLTQKFVDLVKANEGSIDLKAATKILDVQKRRIYDITNVLEGIGLIDKGRHCSLVRWRGGGFNNAKDQENYDLARSRTNHLKMLEDDLDRQLEYAQRNLRYVMQDPSNRSYAYVTRDDLLDIFGDDSVFTIPNYDEEVDIKRNHYELAVSLDNGSAIDIRLVTNQGKSTTNPHDVDGFFDYHRLDTPSPSTSSHSSEDGNAPACAGNVITDEHGYSCNPGMKDEMKLLENELTAKIIFQNYLSGHSLRRFYPDDPNLENPPLLQLNPPQEDFNFALKSDEGICELFDVQCS.

The interval 1-73 (MYKRKTASIV…QSQSQPGQQR (73 aa)) is disordered. A compositionally biased stretch (low complexity) spans 15–26 (SAAGTTSSAMMM). Polar residues predominate over residues 31 to 49 (AETSVRSQSYESTPVSMDT). Residues 59-73 (SPSNSQSQSQPGQQR) show a composition bias toward low complexity. Residues 72–137 (QRSVGSLVLL…GRHCSLVRWR (66 aa)) mediate DNA binding. The tract at residues 137-226 (RGGGFNNAKD…VDIKRNHYEL (90 aa)) is dimerization.

Belongs to the E2F/DP family. In terms of assembly, forms a heterodimer with Dp. Interacts with Rbf/Rbf1 and Rbf2. Component of the DREAM complex, which is at least composed of Myb, Caf1-55, mip40, mip120, mip130, E2f2, Dp, Rbf, Rbf2, lin-52, HDAC1/Rpd3 and l(3)mbt. Ubiquitously expressed in eye disk.

The protein resides in the nucleus. Functionally, transcriptional repressor that binds to E2f sites and represses E2f-regulated target genes. Binding to E2f sites requires transcription factor Dp. Acts synergistically with Rbf2 to antagonize E2f1-mediated transcriptional activation. Component of the DREAM complex, a multiprotein complex that can both act as a transcription activator or repressor depending on the context. The DREAM complex is required for recruiting E2f2 at differentiation-specific promoters and for stabilizing E2f2-Rbf complexes during S phase. During development, the complex represses transcription of developmentally controlled E2f target genes. During oogenesis, plays a role in restricting DNA synthesis to sites of chorion gene amplification in late stage ovarian follicle cells. Plays an inhibitory role in ionizing radiation (IR)-induced p53-independent apoptosis. May be involved in cell cycle exit by temporarily limiting CycE-dependent activation of E2f-regulated transcription. This chain is Transcription factor E2F2 (E2f2), found in Drosophila melanogaster (Fruit fly).